The primary structure comprises 209 residues: MLELFPSEDVSPLYFEQRLSRQGYRRIAGIDEAGRGPLAGPVVAAAVVLPPVFDLPGLNDSKKISAKLREKLFPQIRRQALDYGIGLASAQEVDGLNVLQATLLAMRRALDRLAQPADYLLVDGITPVPLPLPQKTLKQGDSRSLSIAAASVLAKVVRDRLMTTYDARFPEYGFAGHKGYGSAAHRAAIARLGPCPLHRATFRGVREYL.

Residues 25–209 (RRIAGIDEAG…ATFRGVREYL (185 aa)) form the RNase H type-2 domain. Positions 31, 32, and 123 each coordinate a divalent metal cation.

Belongs to the RNase HII family. Mn(2+) is required as a cofactor. Mg(2+) serves as cofactor.

Its subcellular location is the cytoplasm. The enzyme catalyses Endonucleolytic cleavage to 5'-phosphomonoester.. Functionally, endonuclease that specifically degrades the RNA of RNA-DNA hybrids. This Syntrophotalea carbinolica (strain DSM 2380 / NBRC 103641 / GraBd1) (Pelobacter carbinolicus) protein is Ribonuclease HII.